Reading from the N-terminus, the 78-residue chain is Ferritin light chain (78 aa).

The Ferritin-like diiron domain maps to 1–59; it reads EAALHLEKGLNQALVDLHALGSARADPHLCDFLENHFLDEEVKLIKKMGDHLTNLRRLS.

The protein belongs to the ferritin family. Oligomer of 24 subunits. There are two types of subunits: L (light) chain and H (heavy) chain. The major chain can be light or heavy, depending on the species and tissue type. The functional molecule forms a roughly spherical shell with a diameter of 12 nm and contains a central cavity into which the insoluble mineral iron core is deposited. Interacts with NCOA4.

Its subcellular location is the cytoplasmic vesicle. The protein resides in the autophagosome. The protein localises to the cytoplasm. It localises to the autolysosome. Stores iron in a soluble, non-toxic, readily available form. Important for iron homeostasis. Iron is taken up in the ferrous form and deposited as ferric hydroxides after oxidation. Also plays a role in delivery of iron to cells. Mediates iron uptake in capsule cells of the developing kidney. Delivery to lysosomes by the cargo receptor NCOA4 for autophagic degradation and release or iron. This chain is Ferritin light chain (FTL), found in Sus scrofa (Pig).